Reading from the N-terminus, the 446-residue chain is Rhamnogalacturonase A (446 aa).

The first 18 residues, 1–18 (MPALPILALALAPLLVNG), serve as a signal peptide directing secretion. A disulfide bond links C39 and C65. Residues N50, N115, and N124 are each glycosylated (N-linked (GlcNAc...) asparagine). D216 acts as the Proton donor in catalysis. A disulfide bridge connects residues C218 and C235. N-linked (GlcNAc...) asparagine glycans are attached at residues N236, N281, and N318. Intrachain disulfides connect C341/C347 and C369/C378.

Belongs to the glycosyl hydrolase 28 family.

The protein localises to the secreted. The enzyme catalyses Endohydrolysis of alpha-D-GalA-(1-&gt;2)-alpha-L-Rha glycosidic bond in the rhamnogalacturonan I backbone with initial inversion of anomeric configuration releasing oligosaccharides with beta-D-GalA at the reducing end.. Pectinolytic enzymes consist of four classes of enzymes: pectine lyase, polygalacturonase, pectin methylesterase and rhamnogalacturonase. Hydrolyzes alpha-D-galacturonopyranosyl-(1,2)-alpha-L-rhamnopyranosyl linkages in the backbone of the hairy regions of pectins. The protein is Rhamnogalacturonase A (rhgA) of Aspergillus niger.